Consider the following 209-residue polypeptide: Adenylate kinase (209 aa).

59–64 (GSGKRT) lines the ATP pocket. Residues 79–108 (SSGQVLTRGVESGSETSQLAHSYVSRGERV) form an NMP region. AMP contacts are provided by residues serine 80, 106–108 (ERV), 135–138 (GYPR), and glutamine 142. An LID region spans residues 172 to 205 (HRRYDPATNKXYHMLDNPPPGGRCRVMRTAPAEG). Arginine 173 is an ATP binding site.

This sequence belongs to the adenylate kinase family. In terms of assembly, monomer.

The protein localises to the cytoplasm. The catalysed reaction is AMP + ATP = 2 ADP. Its function is as follows. Catalyzes the reversible transfer of the terminal phosphate group between ATP and AMP. Plays an important role in cellular energy homeostasis and in adenine nucleotide metabolism. This is Adenylate kinase from Trypanosoma brucei rhodesiense.